The following is a 744-amino-acid chain: Probable methylmalonyl-CoA mutase, mitochondrial (744 aa).

Residues 605-737 (QPRIMVAKMG…EKLEANLPEA (133 aa)) form the B12-binding domain. His-618 is an adenosylcob(III)alamin binding site.

Belongs to the methylmalonyl-CoA mutase family. As to quaternary structure, homodimer. Adenosylcob(III)alamin serves as cofactor.

The protein localises to the mitochondrion matrix. It catalyses the reaction (R)-methylmalonyl-CoA = succinyl-CoA. Its function is as follows. Involved, in man, in the degradation of several amino acids, odd-chain fatty acids and cholesterol via propionyl-CoA to the tricarboxylic acid cycle. MCM has different functions in other species. In Caenorhabditis elegans, this protein is Probable methylmalonyl-CoA mutase, mitochondrial (mmcm-1).